Consider the following 556-residue polypeptide: MCGAHFVAIALLVAAGCQTAAEFDQDDIQQTSKDDSMASIDLLQSRNLRESRDSKDDLLSAGDEERTPPFPSGVLKEPKVADSTMAAANVMRTEGEASAIKAASKNLNQLKSNKPQRIAPASRSVAGQVLHSSPDSDKSLVSVENEQLLVLAKRRRTKHPTAMMTNAVRSAEQHDYRLAPTESSTLPAQASDGQLSKQLITQKVLQLDKKKHVDESLWREELMTVDEVLHLLETFDKPAHPTAVNVHEANAIGIATKKLNYLRRNKRKRIAPTSNNVVGQVPHAQPDPDKSPVLVAKDIPSVLAKRLRTDHPTAIMENAARFVTQHNYRLAPTGPSTIIAATPNSQLKYHLPGQKALHLDKNEHAGDLKSLRNEESHTIEHILHLRERNDKSAHTTAENHQSVPEDWNTVSAKGPKLLSKDSINEKVKKVHAAFVEAFNLPFHQYPEETAMMLKLVQRKTKSSPNNGETYDAFMYMAELQQHSSHLRKLLGPDLKMLLGTDKTVLPIKLENLQEAYNVKLVIMYDLFFEFCHDRKDLVEGLPRKPKPNQWILKLST.

An N-terminal signal peptide occupies residues 1 to 19; the sequence is MCGAHFVAIALLVAAGCQT. 3 disordered regions span residues 43–76, 108–138, and 389–408; these read LQSR…GVLK, NQLK…DSDK, and NDKS…EDWN. A RxLR-dEER motif is present at residues 46-66; it reads RNLRESRDSKDDLLSAGDEER. The segment covering 47-67 has biased composition (basic and acidic residues); sequence NLRESRDSKDDLLSAGDEERT.

Belongs to the RxLR effector family.

The protein resides in the secreted. The protein localises to the host cell. Functionally, secreted effector that partially suppresses the host cell death induced by cell death-inducing proteins. The protein is Secreted RxLR effector protein 114 of Plasmopara viticola (Downy mildew of grapevine).